We begin with the raw amino-acid sequence, 1249 residues long: Myosin-1 (1249 aa).

A disordered region spans residues 1-40; that stretch reads MGHSRRPAGGEKKSRFGRSKAAADVGDGRQAGGKPQVRKA. The 680-residue stretch at 50 to 729 folds into the Myosin motor domain; sequence IGVSDLTLLS…TLFALEAMRD (680 aa). 143–150 provides a ligand contact to ATP; it reads GESGAGKT. Position 371 is a phosphoserine (S371). The segment at 418-500 is actin-binding; sequence SIGILDIYGF…PGVFAALNDA (83 aa). IQ domains are found at residues 733 to 753 and 754 to 779; these read HNMAIRIQRAWRNYLRYRTEC and AIRIQRFWRRMNGGLELLKLRDQGHT. A TH1 domain is found at 787-979; it reads RRRMSILGSR…PGEPPNSVSK (193 aa). Disordered stretches follow at residues 959–1081 and 1127–1249; these read DSYK…KAKA and EAYL…DDDW. Low complexity-rich tracts occupy residues 1026–1035 and 1043–1061; these read PQTAAAQPTP and PVAAVAASHSRTSSTASAR. Residues 1062-1073 show a composition bias toward pro residues; it reads APPPPPPAPPAA. In terms of domain architecture, SH3 spans 1074–1135; it reads AGPKKAKALY…PEAYLEEQVA (62 aa). Residues 1137-1149 are compositionally biased toward pro residues; that stretch reads TPKPAPPPPPPVA. Residues 1150 to 1170 show a composition bias toward low complexity; it reads PRASPAPVNGSAAVAAAKAKA. Polar residues predominate over residues 1199–1221; that stretch reads VSMNSQGDSSGASGRGTPSSVSN. A compositionally biased stretch (low complexity) spans 1222-1235; that stretch reads ASLAGGLAEALRAR.

Belongs to the TRAFAC class myosin-kinesin ATPase superfamily. Myosin family. As to quaternary structure, interacts (via IQ domains) with camA. Post-translationally, phosphorylation of the TEDS site (Ser-371) is required for the polarization of the actin cytoskeleton. Phosphorylation probably activates the myosin-I ATPase activity.

The protein localises to the cytoplasm. It is found in the cytoskeleton. The protein resides in the actin patch. Type-I myosin implicated in the organization of the actin cytoskeleton. Required for proper actin cytoskeleton polarization. At the cell cortex, assembles in patch-like structures together with proteins from the actin-polymerizing machinery and promotes actin assembly. Functions as actin nucleation-promoting factor (NPF) for the Arp2/3 complex. Plays an important role in polarized growth, spore germination, hyphal morphogenesis, and septal wall formation. The sequence is that of Myosin-1 (myoA) from Emericella nidulans (strain FGSC A4 / ATCC 38163 / CBS 112.46 / NRRL 194 / M139) (Aspergillus nidulans).